The chain runs to 231 residues: Cytidylate kinase (231 aa).

Glycine 17–threonine 25 provides a ligand contact to ATP.

This sequence belongs to the cytidylate kinase family. Type 1 subfamily.

It is found in the cytoplasm. It carries out the reaction CMP + ATP = CDP + ADP. It catalyses the reaction dCMP + ATP = dCDP + ADP. This chain is Cytidylate kinase, found in Ralstonia pickettii (strain 12J).